The sequence spans 522 residues: Cytochrome P450 1A1 (522 aa).

Position 229 (F229) interacts with substrate. C463 is a binding site for heme.

Belongs to the cytochrome P450 family. Requires heme as cofactor. Liver.

The protein localises to the endoplasmic reticulum membrane. The protein resides in the microsome membrane. The enzyme catalyses an organic molecule + reduced [NADPH--hemoprotein reductase] + O2 = an alcohol + oxidized [NADPH--hemoprotein reductase] + H2O + H(+). Functionally, cytochromes P450 are a group of heme-thiolate monooxygenases. They oxidize a variety of structurally unrelated compounds, including steroids, fatty acids, and xenobiotics. This chain is Cytochrome P450 1A1 (cyp1a1), found in Oncorhynchus mykiss (Rainbow trout).